We begin with the raw amino-acid sequence, 445 residues long: Phosphoglucosamine mutase (445 aa).

Residue S102 is the Phosphoserine intermediate of the active site. Residues S102, D241, D243, and D245 each coordinate Mg(2+). At S102 the chain carries Phosphoserine.

The protein belongs to the phosphohexose mutase family. Requires Mg(2+) as cofactor. In terms of processing, activated by phosphorylation.

It carries out the reaction alpha-D-glucosamine 1-phosphate = D-glucosamine 6-phosphate. In terms of biological role, catalyzes the conversion of glucosamine-6-phosphate to glucosamine-1-phosphate. In Rhodococcus erythropolis (strain PR4 / NBRC 100887), this protein is Phosphoglucosamine mutase.